The sequence spans 344 residues: MGPPSAPPCRLHVPWKEVLLTASLLTFWNPPTTAKLTIESTPFNVAEGKEVLLLAHNLPQNRIGYSWYKGERVDGNSLIVGYVIGTQQATPGPAYSGRETIYPNASLLIQNVTQNDTGFYTLQVIKSDLVNEEATGQFHVYPELPKPSISSNNSNPVEDKDAVAFTCEPEVQNTTYLWWVNGQSLPVSPRLQLSNGNMTLTLLSVKRNDAGSYECEIQNPASANRSDPVTLNVLYGPDVPTISPSKANYRPGENLNLSCHAASNPPAQYSWFINGTFQQSTQELFIPNITVNNSGSYMCQAHNSATGLNRTTVTMITVSGSAPVLSAVATVGITIGVLARVALI.

A signal peptide spans 1–34 (MGPPSAPPCRLHVPWKEVLLTASLLTFWNPPTTA). An Ig-like V-type domain is found at 35–142 (KLTIESTPFN…EATGQFHVYP (108 aa)). N-linked (GlcNAc...) asparagine glycans are attached at residues Asn-104, Asn-111, Asn-115, Asn-152, Asn-173, Asn-197, Asn-224, Asn-256, Asn-274, Asn-288, Asn-292, and Asn-309. Ig-like C2-type domains follow at residues 145 to 232 (PKPS…VTLN) and 240 to 314 (PTIS…TTVT). The cysteines at positions 167 and 215 are disulfide-linked. Cys-259 and Cys-299 are joined by a disulfide. Gly-320 carries the GPI-anchor amidated glycine lipid modification. Residues 321–344 (SAPVLSAVATVGITIGVLARVALI) constitute a propeptide, removed in mature form.

Belongs to the immunoglobulin superfamily. CEA family. Homodimer; homodimerizes via its Ig-like V-type domain. Heterodimer with CEACAM8; heterodimerizes via its Ig-like V-type domain. Post-translationally, glycosylated. Expressed in neutrophils. Expressed in columnar epithelial and goblet cells of the colon. Expressed in numerous tumor cell lines (at protein level).

The protein resides in the cell membrane. The protein localises to the apical cell membrane. It localises to the cell surface. In terms of biological role, cell surface glycoprotein that plays a role in cell adhesion and tumor progression. Intercellular adhesion occurs in a calcium- and fibronectin-independent manner. Mediates homophilic and heterophilic cell adhesion with other carcinoembryonic antigen-related cell adhesion molecules, such as CEACAM5 and CEACAM8. Heterophilic interaction with CEACAM8 occurs in activated neutrophils. Plays a role in neutrophil adhesion to cytokine-activated endothelial cells. Plays a role in cell migration and cell adhesion to endothelial cells. This chain is Cell adhesion molecule CEACAM6, found in Homo sapiens (Human).